Consider the following 495-residue polypeptide: Protein painting of fourth (495 aa).

Residues 1 to 51 are disordered; sequence MDSKRAALESGDGPDAKRLDTTDDQDKEASGGDGSQVMLAKHVAPYTGHGC. In terms of domain architecture, RRM spans 215–289; sequence CSLYVGNIPF…RTLTVRYRRL (75 aa). Residues 332–342 are compositionally biased toward low complexity; it reads ISDSDNCSDSS. Disordered stretches follow at residues 332–358, 432–451, and 461–495; these read ISDS…INEQ, PVPA…KKAK, and GPFR…DPDP. Over residues 345 to 358 the composition is skewed to basic and acidic residues; sequence GKEDGKRKKKINEQ. Residues 351–367 carry the Bipartite nuclear localization signal motif; sequence RKKKINEQEREIEKLKR. The span at 472–495 shows a compositional bias: basic and acidic residues; that stretch reads TADEYEKDDRLEELYAQLERDPDP.

In terms of assembly, interacts with Zeste. Weakly expressed in embryos. Expression increases during larval and pupal stages. In adults, it is predominantly expressed in males, while it is weakly expressed in females.

It is found in the nucleus. The protein resides in the chromosome. Functionally, probable RNA-binding protein that specifically binds to the fourth chromosome and may bind an RNA that spreads the fourth chromosome. May be a reminiscence of X chromosome dosage compensation of ancestral Drosophila species in which the X and the fourth chromosomes are one single chromosome. This is Protein painting of fourth (Pof) from Drosophila melanogaster (Fruit fly).